Here is a 508-residue protein sequence, read N- to C-terminus: RanBP-type and C3HC4-type zinc finger-containing protein 1 (508 aa).

At M1 the chain carries N-acetylmethionine. The interval 1 to 218 is interaction with IRF3; the sequence is MDEKTKKAEE…PGCEMCCRAR (218 aa). Residues 1–268 form an interaction with TAB2 region; it reads MDEKTKKAEE…NYLQHVQLEQ (268 aa). At S50 the chain carries Phosphoserine. A Ubiquitin-like domain is found at 55–119; that stretch reads IRLCVSVEDA…DQETLHSHGI (65 aa). The segment at 69 to 131 is interaction with RNF31; that stretch reads VTIWLTVRPD…NGDSAYLYLL (63 aa). Positions 161 to 191 are disordered; that stretch reads TLQPRGPLEPVLPKPRTHQETGQPDAAPESP. The RanBP2-type zinc-finger motif lies at 188-220; the sequence is PESPPVGWQCPGCTFINKPTRPGCEMCCRARPE. Residues 231–260 are a coiled coil; the sequence is DEEERARLAGEEEALRQYEQRKQQQQEGNY. The segment at 276–504 is TRIAD supradomain; sequence EPAECPVCYS…VNGIPCHPSC (229 aa). C280, C283, C298, H300, C303, C306, and C321 together coordinate Zn(2+). The segment at 280–330 adopts an RING-type 1 zinc-finger fold; sequence CPVCYSVLAPGEAVVLRECLHTFCRECLQGTIRNSQEAEVSCPFIDNTYSC. Residue Y328 is modified to Phosphotyrosine. Residues C330, C369, C374, C389, C392, C397, C400, H404, C409, C445, and C448 each contribute to the Zn(2+) site. An IBR-type zinc finger spans residues 349-409; that stretch reads QRFLDLGVSI…CKAIHERMNC (61 aa). An RING-type 2; atypical zinc finger spans residues 445–474; the sequence is CPQCRIVVQKKDGCDWIRCTVCHTEICWVT. Residue C458 is part of the active site. Positions 463 and 466 each coordinate Zn(2+).

The protein belongs to the RBR family. As to quaternary structure, component of the LUBAC complex (linear ubiquitin chain assembly complex) which consists of SHARPIN, RBCK1 and RNF31. LUBAC has a MW of approximately 600 kDa suggesting a heteromultimeric assembly of its subunits. Interacts with beta-I-type (PRKCB1) and zeta-type protein kinase C (PRKCZ). Interacts with UBE2L3. Interacts with IREB2 only in iron-rich conditions. Associates with the TNF-R1 signaling complex (TNF-RSC) in a stimulation-dependent manner. Interacts with EYA1, TAB2, TAB3, MAP3K7 TRAF6 and RIPK1. Interacts with IRF3. Auto-ubiquitinated. Auto-ubiquitination leads to degradation by the proteasome. In terms of processing, phosphorylated. In vitro, phosphorylation inhibits auto-ubiquitination activity. Widely expressed.

It catalyses the reaction [E2 ubiquitin-conjugating enzyme]-S-ubiquitinyl-L-cysteine + [acceptor protein]-L-lysine = [E2 ubiquitin-conjugating enzyme]-L-cysteine + [acceptor protein]-N(6)-ubiquitinyl-L-lysine.. It participates in protein modification; protein ubiquitination. Functionally, E3 ubiquitin-protein ligase, which accepts ubiquitin from specific E2 ubiquitin-conjugating enzymes, such as UBE2L3/UBCM4, and then transfers it to substrates. Functions as an E3 ligase for oxidized IREB2 and both heme and oxygen are necessary for IREB2 ubiquitination. Promotes ubiquitination of TAB2 and IRF3 and their degradation by the proteasome. Component of the LUBAC complex which conjugates linear ('Met-1'-linked) polyubiquitin chains to substrates and plays a key role in NF-kappa-B activation and regulation of inflammation. LUBAC conjugates linear polyubiquitin to IKBKG and RIPK1 and is involved in activation of the canonical NF-kappa-B and the JNK signaling pathways. Linear ubiquitination mediated by the LUBAC complex interferes with TNF-induced cell death and thereby prevents inflammation. LUBAC is recruited to the TNF-R1 signaling complex (TNF-RSC) following polyubiquitination of TNF-RSC components by BIRC2 and/or BIRC3 and to conjugate linear polyubiquitin to IKBKG and possibly other components contributing to the stability of the complex. The LUBAC complex is also involved in innate immunity by conjugating linear polyubiquitin chains at the surface of bacteria invading the cytosol to form the ubiquitin coat surrounding bacteria. LUBAC is not able to initiate formation of the bacterial ubiquitin coat, and can only promote formation of linear polyubiquitins on pre-existing ubiquitin. The bacterial ubiquitin coat acts as an 'eat-me' signal for xenophagy and promotes NF-kappa-B activation. Together with OTULIN, the LUBAC complex regulates the canonical Wnt signaling during angiogenesis. Binds polyubiquitin of different linkage types. The protein is RanBP-type and C3HC4-type zinc finger-containing protein 1 (Rbck1) of Rattus norvegicus (Rat).